Reading from the N-terminus, the 315-residue chain is Acetyl-coenzyme A carboxylase carboxyl transferase subunit alpha (315 aa).

Residues 40-293 (LQDKSKTLTE…REELSSQLAM (254 aa)) form the CoA carboxyltransferase C-terminal domain.

Belongs to the AccA family. In terms of assembly, acetyl-CoA carboxylase is a heterohexamer composed of biotin carboxyl carrier protein (AccB), biotin carboxylase (AccC) and two subunits each of ACCase subunit alpha (AccA) and ACCase subunit beta (AccD).

It localises to the cytoplasm. It catalyses the reaction N(6)-carboxybiotinyl-L-lysyl-[protein] + acetyl-CoA = N(6)-biotinyl-L-lysyl-[protein] + malonyl-CoA. Its pathway is lipid metabolism; malonyl-CoA biosynthesis; malonyl-CoA from acetyl-CoA: step 1/1. Functionally, component of the acetyl coenzyme A carboxylase (ACC) complex. First, biotin carboxylase catalyzes the carboxylation of biotin on its carrier protein (BCCP) and then the CO(2) group is transferred by the carboxyltransferase to acetyl-CoA to form malonyl-CoA. The sequence is that of Acetyl-coenzyme A carboxylase carboxyl transferase subunit alpha from Pseudomonas syringae pv. tomato (strain ATCC BAA-871 / DC3000).